A 419-amino-acid chain; its full sequence is L-rhamnose isomerase (419 aa).

Residues His262, Asp294, and Asp296 each coordinate Mn(2+).

Belongs to the rhamnose isomerase family. As to quaternary structure, homotetramer. Requires Mn(2+) as cofactor.

Its subcellular location is the cytoplasm. It carries out the reaction L-rhamnopyranose = L-rhamnulose. It functions in the pathway carbohydrate degradation; L-rhamnose degradation; glycerone phosphate from L-rhamnose: step 1/3. In terms of biological role, catalyzes the interconversion of L-rhamnose and L-rhamnulose. This chain is L-rhamnose isomerase, found in Citrobacter koseri (strain ATCC BAA-895 / CDC 4225-83 / SGSC4696).